Reading from the N-terminus, the 190-residue chain is uncharacterized protein (190 aa).

The protein to E.coli YdjR.

This is an uncharacterized protein from Pseudomonas putida (Arthrobacter siderocapsulatus).